We begin with the raw amino-acid sequence, 380 residues long: Alcohol dehydrogenase 1 (380 aa).

8 residues coordinate Zn(2+): cysteine 48, threonine 50, histidine 70, cysteine 100, cysteine 103, cysteine 106, cysteine 114, and cysteine 178. 2 residues coordinate an alcohol: threonine 50 and histidine 70. An NAD(+)-binding site is contributed by threonine 50. Residues 203–208 (GLGAVG), aspartate 227, arginine 232, threonine 273, valine 296, 296–298 (VGV), and arginine 373 contribute to the NAD(+) site.

It belongs to the zinc-containing alcohol dehydrogenase family. Homodimer. It depends on Zn(2+) as a cofactor.

It is found in the cytoplasm. It catalyses the reaction a primary alcohol + NAD(+) = an aldehyde + NADH + H(+). The enzyme catalyses a secondary alcohol + NAD(+) = a ketone + NADH + H(+). In Pisum sativum (Garden pea), this protein is Alcohol dehydrogenase 1.